The primary structure comprises 652 residues: Phosphoglucomutase 1, chloroplastic (652 aa).

A chloroplast-targeting transit peptide spans 1–84; the sequence is MAFSAAASAS…LAARRTLRVR (84 aa). Alpha-D-glucose 1,6-bisphosphate-binding residues include R118 and S211. S211 acts as the Phosphoserine intermediate in catalysis. S211, D376, D378, and D380 together coordinate Mg(2+). S211 bears the Phosphoserine mark. 6 residues coordinate alpha-D-glucose 1,6-bisphosphate: D380, R381, T443, E462, S464, and K475.

This sequence belongs to the phosphohexose mutase family. Requires Mg(2+) as cofactor.

The protein resides in the plastid. Its subcellular location is the chloroplast. The enzyme catalyses alpha-D-glucose 1-phosphate = alpha-D-glucose 6-phosphate. It catalyses the reaction O-phospho-L-seryl-[protein] + alpha-D-glucose 1-phosphate = alpha-D-glucose 1,6-bisphosphate + L-seryl-[protein]. The catalysed reaction is alpha-D-glucose 1,6-bisphosphate + L-seryl-[protein] = O-phospho-L-seryl-[protein] + alpha-D-glucose 6-phosphate. With respect to regulation, inhibited by the Calvin cycle intermediates fructose-1,6-bisphosphate and ribulose-1,5-bisphosphate. In terms of biological role, catalyzes the reversible isomerization of alpha-D-glucose 1-phosphate to alpha-D-glucose 6-phosphate. The mechanism proceeds via the intermediate compound alpha-D-glucose 1,6-bisphosphate. This enzyme participates in both the breakdown and synthesis of glucose. Required for sucrose production and accumulation necessary during plant development. Promotes gravitropic responses, negative in shoots but positive in roots, by facilitating starch granules (statoliths) formation. The polypeptide is Phosphoglucomutase 1, chloroplastic (Marchantia polymorpha (Common liverwort)).